A 469-amino-acid chain; its full sequence is MPIRALCTICSDFFDHSRDVAAIHCGHTFHLQCLIQWFETAPSRTCPQCRIQVGKRTIINKLFFDLAQEEENVLDAEFLKNELDNVRAQLSQKDKEKRDSQVIIDTLRDTLEERNATVVSLQQALGKAEMLCSTLKKQMKYLEQQQDETKQAQEEARRLRSKMKTMEQIELLLQSQRPEVEEMIRDMGVGQSAVEQLAVYCVSLKKEYENLKEARKASGEVADKLRKDLFSSRSKLQTVYSELDQAKLELKSAQKDLQSADKEIMSLKKKLTMLQETLNLPPVASETVDRLVLESPAPVEVNLKLRRPSFRDDIDLNATFDVDTPPARPSSSQHGYYEKLCLEKSHSPIQDVPKKICKGPRKESQLSLGGQSCAGEPDEELVGAFPIFVRNAILGQKQPKRPRSESSCSKDVVRTGFDGLGGRTKFIQPTDTVMIRPLPVKPKTKVKQRVRVKTVPSLFQAKLDTFLWS.

An RING-type zinc finger spans residues 7–50; that stretch reads CTICSDFFDHSRDVAAIHCGHTFHLQCLIQWFETAPSRTCPQCR. Coiled-coil stretches lie at residues 70–177 and 201–280; these read EENV…QSQR and CVSL…TLNL. The interaction with CYLD stretch occupies residues 211 to 469; the sequence is LKEARKASGE…QAKLDTFLWS (259 aa). A Glycyl lysine isopeptide (Lys-Gly) (interchain with G-Cter in SUMO2) cross-link involves residue lysine 304. Residues 460–469 carry the PIP-box motif; the sequence is QAKLDTFLWS.

Belongs to the TRAIP family. In terms of assembly, interacts (via PIP-box) with PCNA. Binds TRAF1, TRAF2, TRAF3, TRAF5 and TRAF6 is part of the receptor-TRAF signaling complex. May interact with CYLD; the C-terminus interacts with CYLD, however the interaction was not detected with the full-length protein. Interacts with POLK and POLN. Interacts with UIMC1. In terms of processing, sumoylated; sumoylation is required for nuclear localization. Sumoylation increases protein stability, possibly by preventing ubiquitination. Autoubiquitinated.

The protein localises to the nucleus. The protein resides in the nucleoplasm. Its subcellular location is the nucleolus. It is found in the chromosome. It localises to the cytoplasm. The protein localises to the perinuclear region. The catalysed reaction is S-ubiquitinyl-[E2 ubiquitin-conjugating enzyme]-L-cysteine + [acceptor protein]-L-lysine = [E2 ubiquitin-conjugating enzyme]-L-cysteine + N(6)-ubiquitinyl-[acceptor protein]-L-lysine.. It participates in protein modification; protein ubiquitination. In terms of biological role, E3 ubiquitin ligase required to protect genome stability in response to replication stress. Acts as a key regulator of interstrand cross-link repair, which takes place when both strands of duplex DNA are covalently tethered together, thereby blocking replication and transcription. Controls the choice between the two pathways of replication-coupled interstrand-cross-link repair by mediating ubiquitination of MCM7 subunit of the CMG helicase complex. Short ubiquitin chains on MCM7 promote recruitment of DNA glycosylase NEIL3. If the interstrand cross-link cannot be cleaved by NEIL3, the ubiquitin chains continue to grow on MCM7, promoting the unloading of the CMG helicase complex by the VCP/p97 ATPase, enabling the Fanconi anemia DNA repair pathway. Only catalyzes ubiquitination of MCM7 when forks converge. Also involved in the repair of covalent DNA-protein cross-links (DPCs) during DNA synthesis: promotes ubiquitination of DPCs, leading to their degradation by the proteasome. Has also been proposed to play a role in promoting translesion synthesis by mediating the assembly of 'Lys-63'-linked poly-ubiquitin chains on the Y-family polymerase POLN in order to facilitate bypass of DNA lesions and preserve genomic integrity. The function in translesion synthesis is however controversial. Acts as a regulator of the spindle assembly checkpoint. Also acts as a negative regulator of innate immune signaling by inhibiting activation of NF-kappa-B mediated by TNF. Negatively regulates TLR3/4- and RIG-I-mediated IRF3 activation and subsequent IFNB1 production and cellular antiviral response by promoting 'Lys-48'-linked polyubiquitination of TNK1 leading to its proteasomal degradation. This is E3 ubiquitin-protein ligase TRAIP from Homo sapiens (Human).